We begin with the raw amino-acid sequence, 308 residues long: MTVEASGEAPAATRCGFVALIGAPNVGKSTLVNALVGAKVTIVSRKVQTTRALIRGIVIENNAQIILVDTPGIFSPKRRLDRAMVSTAWSGAHDADLVCVLLDAKTGIDEEAEAILAKAASVNHDKILVINKVDLVQREKLLALAQAANERMPFAKTFMIAAISGDGVDDLRSTLAEMVPPGPFLYPEDQMSDAPMRHLAAEITREKIYRKLHQELPYQSTVETDKWEERKDKSVRIEQTIFVERESQRKIVLGKGGATIKSIGADSRKEISEILGVPVHLFLFVKVRENWGDDPDRYREMGLEFPKE.

Residues 14-181 (RCGFVALIGA…RSTLAEMVPP (168 aa)) form the Era-type G domain. Residues 22–29 (GAPNVGKS) form a G1 region. 22-29 (GAPNVGKS) is a binding site for GTP. Residues 48 to 52 (QTTRA) form a G2 region. Residues 69-72 (DTPG) form a G3 region. GTP contacts are provided by residues 69–73 (DTPGI) and 131–134 (NKVD). Residues 131 to 134 (NKVD) are G4. The interval 160 to 162 (IAA) is G5. Residues 212-289 (LHQELPYQST…HLFLFVKVRE (78 aa)) form the KH type-2 domain.

This sequence belongs to the TRAFAC class TrmE-Era-EngA-EngB-Septin-like GTPase superfamily. Era GTPase family. In terms of assembly, monomer.

Its subcellular location is the cytoplasm. The protein resides in the cell inner membrane. An essential GTPase that binds both GDP and GTP, with rapid nucleotide exchange. Plays a role in 16S rRNA processing and 30S ribosomal subunit biogenesis and possibly also in cell cycle regulation and energy metabolism. The protein is GTPase Era of Bradyrhizobium diazoefficiens (strain JCM 10833 / BCRC 13528 / IAM 13628 / NBRC 14792 / USDA 110).